The sequence spans 1018 residues: D-2-hydroxyglutarate dehydrogenase (1018 aa).

The FAD-binding PCMH-type domain occupies 48 to 281 (YQLLPDAVVF…TEARLDITRL (234 aa)). Residues R402 and H500 each coordinate (R)-2-hydroxyglutarate. Positions 662–695 (FSHEVKEAMSGCLACKACSTQCPIKIDVPEFRSR) constitute a 4Fe-4S ferredoxin-type domain. [4Fe-4S] cluster contacts are provided by C673, C676, C679, and C683.

In the N-terminal section; belongs to the FAD-binding oxidoreductase/transferase type 4 family. As to quaternary structure, homotetramer. [4Fe-4S] cluster serves as cofactor. It depends on FAD as a cofactor.

It carries out the reaction (R)-2-hydroxyglutarate + A = 2-oxoglutarate + AH2. Its activity is regulated as follows. Activity is completely inhibited by the addition of 0.5 mM Mn(2+), Ni(2+), or Co(2+) and partially inhibited by 0.5 mM Zn(2+). Functionally, catalyzes the oxidation of D-2-hydroxyglutarate (D-2-HGA) to 2-oxoglutarate. Appears to be the only D2HGDH in E.coli, providing the way to recycle D-2-HGA produced during L-serine synthesis by SerA, by converting it back to 2-oxoglutarate. The physiological molecule that functions as the primary electron acceptor during D-2-HGA oxidation by YdiJ in E.coli is unknown. Shows strict substrate specificity towards D-2-HGA, since it has no detectable activity on L-2-hydroxyglutarate, L-malate, D-malate, L-lactate, D-lactate, L-tartrate, D-tartrate, L-glycerate, D-glycerate, glutarate, or pyruvate. The protein is D-2-hydroxyglutarate dehydrogenase (ydiJ) of Escherichia coli (strain K12).